The chain runs to 375 residues: RNA exonuclease 4 (375 aa).

The interval 21 to 78 is disordered; the sequence is KTLGSDASSSSASSSTNNRRKLSTSESTKPKRTRLDAKEKDAEGSKSCSPAPTSLPWF. Positions 25 to 35 are enriched in low complexity; sequence SDASSSSASSS. Positions 53–64 are enriched in basic and acidic residues; that stretch reads TRLDAKEKDAEG. One can recognise an Exonuclease domain in the interval 134-297; that stretch reads NYLAIDCEMV…FRSQKPKWDE (164 aa).

It belongs to the REXO4 family.

It localises to the nucleus. Its function is as follows. Exoribonuclease involved in ribosome biosynthesis. Involved in the processing of ITS1, the internal transcribed spacer localized between the 18S and 5.8S rRNAs. This is RNA exonuclease 4 (REX4) from Mycosarcoma maydis (Corn smut fungus).